The sequence spans 285 residues: Shikimate dehydrogenase (NADP(+)) (285 aa).

Residues 20 to 22 (SIS) and S67 contribute to the shikimate site. K71 acts as the Proton acceptor in catalysis. Residue E83 coordinates NADP(+). Residues N92 and D107 each coordinate shikimate. Residues 129 to 133 (GAGGA) and M227 each bind NADP(+). Y229 serves as a coordination point for shikimate. G250 contacts NADP(+).

The protein belongs to the shikimate dehydrogenase family. As to quaternary structure, homodimer.

It carries out the reaction shikimate + NADP(+) = 3-dehydroshikimate + NADPH + H(+). The protein operates within metabolic intermediate biosynthesis; chorismate biosynthesis; chorismate from D-erythrose 4-phosphate and phosphoenolpyruvate: step 4/7. Involved in the biosynthesis of the chorismate, which leads to the biosynthesis of aromatic amino acids. Catalyzes the reversible NADPH linked reduction of 3-dehydroshikimate (DHSA) to yield shikimate (SA). This is Shikimate dehydrogenase (NADP(+)) from Streptococcus gordonii (strain Challis / ATCC 35105 / BCRC 15272 / CH1 / DL1 / V288).